The sequence spans 790 residues: Ribosome biogenesis protein ERB1 (790 aa).

Residues 1–93 (MAKKNTVTGS…SDELQDDSNS (93 aa)) are disordered. Positions 20–89 (SPEVSESEEI…SEDFSDELQD (70 aa)) are enriched in acidic residues. The segment at 255–371 (RFVPSKHEAK…LRKVPAYQEN (117 aa)) is required for interaction with NOP7. Positions 371-407 (NLRERFERSLDLYLAPRVRHNKLNIDPDSLIPDLPSP) are required for interaction with YTM1. 7 WD repeats span residues 423–462 (GHIGRVRTLSIDPSGLWLATGGDDGTVRVWEILTGRQVYH), 470–510 (KDDD…YEIE), 574–616 (QCRK…SQSP), 619–657 (KSKGIIVDAKFHPFKPQLFVASQRSIKIYDLSQQVLTKK), 660–699 (PGARYLSGIDIHPRGDHLLASSYDKRVLWHDLDLSNTPYK), 703–743 (YHEK…DLMT), and 759–790 (VHSLGVLDLVWHPKEAWLFTAGADGTARLWTT).

It belongs to the WD repeat BOP1/ERB1 family. In terms of assembly, component of the NOP7 complex, composed of ERB1, NOP7 and YTM1. The complex is held together by ERB1, which interacts with NOP7 via its N-terminal domain and with YTM1 via a high-affinity interaction between the seven-bladed beta-propeller domains of the 2 proteins. The NOP7 complex associates with the 66S pre-ribosome.

Its subcellular location is the nucleus. It is found in the nucleolus. It localises to the nucleoplasm. In terms of biological role, component of the NOP7 complex, which is required for maturation of the 25S and 5.8S ribosomal RNAs and formation of the 60S ribosome. In Meyerozyma guilliermondii (strain ATCC 6260 / CBS 566 / DSM 6381 / JCM 1539 / NBRC 10279 / NRRL Y-324) (Yeast), this protein is Ribosome biogenesis protein ERB1.